Here is a 366-residue protein sequence, read N- to C-terminus: Endophilin-A (366 aa).

The BAR domain maps to 18–248 (TEKMGGAEGT…LQEKRSEAES (231 aa)). Residues 227 to 247 (QCADVLRGLQETLQEKRSEAE) are a coiled coil. Positions 266-295 (GGGGGLNEDGTPSHISSSASPLPSPMRSPA) are disordered. The span at 277–294 (PSHISSSASPLPSPMRSP) shows a compositional bias: low complexity. The SH3 domain maps to 305-364 (QQQPCCQALYDFDPENPGELGFKENDIITLLNRVDDNWYEGSVNGRTGYFPQSYVQVQVP).

Belongs to the endophilin family.

It localises to the cytoplasm. The protein resides in the membrane. Functionally, required presynaptically at the neuromuscular junction. Implicated in synaptic vesicle endocytosis. The protein is Endophilin-A of Drosophila willistoni (Fruit fly).